A 116-amino-acid polypeptide reads, in one-letter code: Transcription elongation factor SPT4 homolog 1 (116 aa).

The C4-type zinc finger occupies 19-39 (CLRCRLVKTYDQFRDSGCENC).

Belongs to the SPT4 family.

It is found in the nucleus. In terms of biological role, may regulate transcription elongation by RNA polymerase II. May enhance transcriptional pausing at sites proximal to the promoter, which may in turn facilitate the assembly of an elongation competent RNA polymerase II complex. The protein is Transcription elongation factor SPT4 homolog 1 of Arabidopsis thaliana (Mouse-ear cress).